The sequence spans 681 residues: MTSMYNFKRITCVPNAQELKDVVLSKTQRKTPTVVHRQYSIGRIRAFYARKIKFLQQTLHDKLTQIITEFPKMEEIHPFYSDLMNILYDRDHYKIALGQMNTARHLIDGIAREYVRLMKYADSLYRCKMLKRAALGRMVKLLKRQKSSFEYLEQVRQHLSRLPSIDPATRTLILCGFPNVGKSSFINNVTRADVEVQPYAFTTKALYVGHLDYRFLRWQVIDTPGILDQPLEDRNTIEMQAVTALAHLKASVLFMMDVSEQCDRSIEEQLHLFESIRPLFANKPVLIGLNKVDIRHRSDLPPEKAALLDQLEKEGIPIIETSTLTQEGVMGLRDRACDELLAQRVEAKIQAKKITNVEDCVLNRVFVAYPAPRDEKVRAPFVPPGLAAKRAQKKLQEAQELMETDGDEFAAKIPQKPGKIGKEKIAKGGSQSTDLGDLRDENTRRLEREIELEMQDDYILDLKKHYMLKNPDEKYDIVPEIWEGHNLADFVDPEIQSKLENLLREEELLEQAGEYESDLDSDDEETKEKLKLALQIREKEKLLTLDHAVNKRIAGRIGSRIHGSRKRDRSMSRLENELGELGVDVDTKKMKNLQGQCAKPQLGKKMKVGRSRSLSAVRPAPRDELAFPDEEKRAHVDKLRTKAMRGLRREAKKGEADRHVYDLKPKHLFCGKRGNGKTDWR.

The 172-residue stretch at 170–341 folds into the OBG-type G domain; that stretch reads RTLILCGFPN…LRDRACDELL (172 aa). GTP-binding positions include 176–183, 222–226, and 290–293; these read GFPNVGKS, DTPGI, and NKVD.

This sequence belongs to the TRAFAC class OBG-HflX-like GTPase superfamily. OBG GTPase family. NOG subfamily. In terms of tissue distribution, ubiquitously expressed.

The protein localises to the nucleus. Its subcellular location is the nucleolus. Involved in the biogenesis of the 60S ribosomal subunit. Has a role in regulating longevity, growth and brood size. May regulate fat storage via the insulin/IGF pathway. This chain is Nucleolar GTP-binding protein 1, found in Caenorhabditis elegans.